A 269-amino-acid chain; its full sequence is Aquaporin-7 (269 aa).

Topologically, residues 1-20 are cytoplasmic; that stretch reads MAGSVLENIQSVLQKTWVRE. The residue at position 4 (Ser4) is a Phosphoserine. A helical membrane pass occupies residues 21-38; that stretch reads FLAEFLSTYVLMVFGLGS. Over 39–51 the chain is Extracellular; the sequence is VAHMVLGERLGSY. Residues 52 to 69 traverse the membrane as a helical segment; that stretch reads LGVNLGFGFGVTMGIHVA. Over 70–73 the chain is Cytoplasmic; sequence GGIS. Residues 74–87 constitute an intramembrane region (discontinuously helical); sequence GAHMNAAVTFTNCA. Positions 78-80 match the NPA 1 motif; that stretch reads NAA. Topologically, residues 88–95 are cytoplasmic; the sequence is LGRMAWKK. The helical transmembrane segment at 96–116 threads the bilayer; sequence FPIYVLGQFLGSFLAAATTYL. The Extracellular portion of the chain corresponds to 117-151; sequence IFYGAINHYAGGELLVTGPKSTANIFATYLPEHMT. A helical transmembrane segment spans residues 152–172; sequence LWRGFVDEVFVTGMLQLCIFA. Residues 173 to 184 are Cytoplasmic-facing; sequence ITDKLNSPALQG. A helical membrane pass occupies residues 185–201; it reads TEPLMIGILVCVLGVSL. Residues 202-205 are Extracellular-facing; sequence GMNT. The discontinuously helical intramembrane region spans 206–219; the sequence is GYAINPSRDLPPRF. Positions 210–212 match the NPA 2 motif; that stretch reads NPS. The Extracellular segment spans residues 220–237; that stretch reads FTFIAGWGKKVFSAGNNW. The helical transmembrane segment at 238-259 threads the bilayer; it reads WWVPVVAPLLGAYLGGIVYLGL. The Cytoplasmic segment spans residues 260–269; it reads IHAGIPPQGS.

It belongs to the MIP/aquaporin (TC 1.A.8) family. As to quaternary structure, homotetramer; each monomer provides an independent glycerol/water pore. Two homotetramers on opposing membranes can dimerize, forming a cell-cell junction. Interacts with PLIN1. Post-translationally, phosphorylation by PKA could prevent the interaction with PLIN1. In terms of tissue distribution, detected in heart, kidney and testis.

It is found in the cell membrane. It localises to the cytoplasmic vesicle membrane. Its subcellular location is the lipid droplet. The enzyme catalyses glycerol(in) = glycerol(out). It catalyses the reaction H2O(in) = H2O(out). It carries out the reaction urea(in) = urea(out). Its activity is regulated as follows. Glycerol transport is regulated by pH, with the porin being permeable to glycerol at pH 7.4 but not at pH 5.5. Water permeability, however, is not influenced by pH. Not inhibited by mercury ions. Aquaglyceroporins form homotetrameric transmembrane channels, with each monomer independently mediating glycerol and water transport across the plasma membrane along their osmotic gradient. Could also be permeable to urea. Mediates the efflux of glycerol, formed upon triglyceride hydrolysis, to avoid its accumulation in adipocytes and to make it available to other tissues. In the kidney, mediates the reabsorption of glycerol, preventing its loss in urine, again participating to energy homeostasis. In pancreatic beta cells, it also mediates the efflux of glycerol, regulating its intracellular levels. This Rattus norvegicus (Rat) protein is Aquaporin-7.